Here is a 165-residue protein sequence, read N- to C-terminus: Crossover junction endodeoxyribonuclease RuvC (165 aa).

Catalysis depends on residues D7, E68, and H142. Residues D7, E68, and H142 each contribute to the Mg(2+) site.

Belongs to the RuvC family. In terms of assembly, homodimer which binds Holliday junction (HJ) DNA. The HJ becomes 2-fold symmetrical on binding to RuvC with unstacked arms; it has a different conformation from HJ DNA in complex with RuvA. In the full resolvosome a probable DNA-RuvA(4)-RuvB(12)-RuvC(2) complex forms which resolves the HJ. Mg(2+) is required as a cofactor.

It is found in the cytoplasm. The catalysed reaction is Endonucleolytic cleavage at a junction such as a reciprocal single-stranded crossover between two homologous DNA duplexes (Holliday junction).. Functionally, the RuvA-RuvB-RuvC complex processes Holliday junction (HJ) DNA during genetic recombination and DNA repair. Endonuclease that resolves HJ intermediates. Cleaves cruciform DNA by making single-stranded nicks across the HJ at symmetrical positions within the homologous arms, yielding a 5'-phosphate and a 3'-hydroxyl group; requires a central core of homology in the junction. The consensus cleavage sequence is 5'-(A/T)TT(C/G)-3'. Cleavage occurs on the 3'-side of the TT dinucleotide at the point of strand exchange. HJ branch migration catalyzed by RuvA-RuvB allows RuvC to scan DNA until it finds its consensus sequence, where it cleaves and resolves the cruciform DNA. This chain is Crossover junction endodeoxyribonuclease RuvC, found in Anaplasma marginale (strain St. Maries).